Here is a 670-residue protein sequence, read N- to C-terminus: Zinc finger and BTB domain-containing protein 5 (670 aa).

The 70-residue stretch at 24-93 folds into the BTB domain; sequence CDCVIVVGNR…MYTSTLMLGE (70 aa). Disordered regions lie at residues 158–256 and 268–382; these read LSSS…QEDG and EDAQ…SSTD. Residues 170-181 show a composition bias toward polar residues; that stretch reads PMSSSMRSSLDQ. The residue at position 234 (serine 234) is a Phosphoserine. Residue lysine 239 forms a Glycyl lysine isopeptide (Lys-Gly) (interchain with G-Cter in SUMO2) linkage. A compositionally biased stretch (polar residues) spans 285 to 295; the sequence is SRATQVETSFE. Residues lysine 317 and lysine 325 each participate in a glycyl lysine isopeptide (Lys-Gly) (interchain with G-Cter in SUMO2) cross-link. Residues 345–360 show a composition bias toward low complexity; it reads AEGSESVEVEGVVVSA. The segment covering 361-374 has biased composition (basic and acidic residues); it reads EKIDLSPESSDRSF. Serine 366 is modified (phosphoserine). Residues lysine 399 and lysine 410 each participate in a glycyl lysine isopeptide (Lys-Gly) (interchain with G-Cter in SUMO2) cross-link. Residues 414–432 show a composition bias toward polar residues; that stretch reads SNFSASQSTDDNLPNTTSD. Disordered regions lie at residues 414-433 and 442-470; these read SNFSASQSTDDNLPNTTSDC and LLSPEAGPAGGPSSAPGSHVENPFSEPAD. The segment covering 444–459 has biased composition (low complexity); that stretch reads SPEAGPAGGPSSAPGS. Glycyl lysine isopeptide (Lys-Gly) (interchain with G-Cter in SUMO2) cross-links involve residues lysine 535, lysine 587, and lysine 590. Residues 606–628 form a C2H2-type 1 zinc finger; it reads YACKICCKTFLTLTDCKKHIRVH. The C2H2-type 2; atypical zinc finger occupies 634 to 657; the sequence is YACLKCGKRFSQSSHLYKHSKTTC. Residues lysine 638 and lysine 651 each participate in a glycyl lysine isopeptide (Lys-Gly) (interchain with G-Cter in SUMO2) cross-link.

The protein resides in the nucleus. Its function is as follows. May be involved in transcriptional regulation. The chain is Zinc finger and BTB domain-containing protein 5 (Zbtb5) from Mus musculus (Mouse).